The sequence spans 338 residues: Taste receptor type 2 member 39 (338 aa).

Residues 1 to 30 (MLGRCFPPNTKEKQQLRMIKLCDPAESELS) lie on the Extracellular side of the membrane. The chain crosses the membrane as a helical span at residues 31 to 51 (PFLITLTLAVLLAEYLTGIIA). The Cytoplasmic segment spans residues 52 to 74 (NGFITAIHAAECVQNKSVSTSGR). The helical transmembrane segment at 75–95 (ILVFLSVSRIALQSLMMLEIT) threads the bilayer. Over 96-116 (ISSTSLSFYSEDTVYYAFKIS) the chain is Extracellular. The chain crosses the membrane as a helical span at residues 117-137 (FIFLNFCSLWFAAWLSFFYFV). Residues 138 to 156 (KIANFSYPLFLKLRWRISG) lie on the Cytoplasmic side of the membrane. Residues 157-177 (LIPWLLWLSVFISFSHSMFCI) form a helical membrane-spanning segment. The Extracellular segment spans residues 178 to 205 (NICTGYCDNSFPIHSSNSTEKTYFSEIS). Asn-194 carries an N-linked (GlcNAc...) asparagine glycan. The chain crosses the membrane as a helical span at residues 206-226 (VVSLAFFFNLGIVIPLIMFIL). Residues 227-262 (AAILLILSLKRHTLYMXSNATGSKDPSMEAHIGAIK) lie on the Cytoplasmic side of the membrane. A helical transmembrane segment spans residues 263-283 (ATSYFLILYIFNAVALFIYLS). Topologically, residues 284–291 (NMFDINSL) are extracellular. The chain crosses the membrane as a helical span at residues 292 to 312 (WNTLCQIIMAAYPASHSILLI). At 313–338 (KDNPGLRRAWKQLQHRLHLYPKEWTL) the chain is on the cytoplasmic side.

The protein belongs to the G-protein coupled receptor T2R family.

It localises to the membrane. Its function is as follows. Receptor that may play a role in the perception of bitterness and is gustducin-linked. May play a role in sensing the chemical composition of the gastrointestinal content. The activity of this receptor may stimulate alpha gustducin, mediate PLC-beta-2 activation and lead to the gating of TRPM5. The sequence is that of Taste receptor type 2 member 39 (TAS2R39) from Papio hamadryas (Hamadryas baboon).